We begin with the raw amino-acid sequence, 358 residues long: MFHAKKPSSMNGSYENRAMCVQGDSGLVLTTDPKPRLRWTVELHERFVDAVAQLGGPDKATPKTIMRVMGVKGLTLYHLKSHLQKFRLGKQPHKEYGDHSTKEGSRASAMDIQRNVASSSGMMSRNMNEMQMEVQRRLHEQLEVQRHLQLRIEAQGKYMQSILERACQTLAGENMAAATAAAAVGGGYKGNLGSSSLSAAVGPPPHPLSFPPFQDLNIYGNTTDQVLDHHNFHHQNIENHFTGNNAADTNIYLGKKRPNPNFGNDVRKGLLMWSDQDHDLSANQSIDDEHRIQIQMATHVSTDLDSLSEIYERKSGLSGDEGNNGGKLLERPSPRRSPLSPMMNPNGGLIQGRNSPFG.

The 61-residue stretch at T31–Q91 folds into the HTH myb-type domain. The H-T-H motif DNA-binding region spans P62–R87. The stretch at R125–Q145 forms a coiled coil. The LHEQLE signature appears at L138–E143. A disordered region spans residues R313 to G358.

The protein belongs to the MYB-CC family. In terms of tissue distribution, expressed in shoots and roots, specifically in the developing protophloem sieve elements. Detected in phloem and/or cambium. Expressed in the phloem tissues of various organs, including leaves and cotyledons, during vegetative growth.

The protein localises to the nucleus. Transcription factor required for phloem identity. Has a dual role both in promoting phloem differentiation and in repressing xylem differentiation during vascular development. Regulates the expression of the transcription factor NAC045 (AC A4VCM0). May activate the transcription of specific genes involved in phosphate uptake or assimilation. Promotes flowering through transcriptional activation of both FT and its transport machinery component, FTIP1. The chain is Myb family transcription factor APL from Arabidopsis thaliana (Mouse-ear cress).